Here is a 297-residue protein sequence, read N- to C-terminus: Large ribosomal subunit protein uL18 (297 aa).

Basic residues predominate over residues 258 to 267 (KKAHPKKRWT). The disordered stretch occupies residues 258–277 (KKAHPKKRWTEKKLTREQRQ). Over residues 268 to 277 (EKKLTREQRQ) the composition is skewed to basic and acidic residues.

Belongs to the universal ribosomal protein uL18 family. As to quaternary structure, component of the large ribosomal subunit (LSU).

The protein resides in the cytoplasm. Its subcellular location is the nucleus. Functionally, component of the ribosome, a large ribonucleoprotein complex responsible for the synthesis of proteins in the cell. The small ribosomal subunit (SSU) binds messenger RNAs (mRNAs) and translates the encoded message by selecting cognate aminoacyl-transfer RNA (tRNA) molecules. The large subunit (LSU) contains the ribosomal catalytic site termed the peptidyl transferase center (PTC), which catalyzes the formation of peptide bonds, thereby polymerizing the amino acids delivered by tRNAs into a polypeptide chain. The nascent polypeptides leave the ribosome through a tunnel in the LSU and interact with protein factors that function in enzymatic processing, targeting, and the membrane insertion of nascent chains at the exit of the ribosomal tunnel. This is Large ribosomal subunit protein uL18 (RPL5A) from Helianthus annuus (Common sunflower).